We begin with the raw amino-acid sequence, 385 residues long: Isocitrate dehydrogenase [NAD] subunit beta, mitochondrial (385 aa).

The transit peptide at 1-34 (MAALSGVRWLTRALVSAGNPGAWRGLSTSAAAHA) directs the protein to the mitochondrion. At K199 the chain carries N6-acetyllysine.

The protein belongs to the isocitrate and isopropylmalate dehydrogenases family. In terms of assembly, heterooligomer of subunits alpha (IDH3A), beta (IDH3B), and gamma (IDH3G) in the apparent ratio of 2:1:1. The heterodimer containing one IDH3A and one IDH3B subunit and the heterodimer containing one IDH3A and one IDH3G subunit assemble into a heterotetramer (which contains two subunits of IDH3A, one of IDH3B and one of IDH3G) and further into the heterooctamer.

The protein resides in the mitochondrion. The heterotetramer and the heterodimer composed of IDH3A and IDH3G subunits can be allosterically activated by citrate (CIT) or/and ADP, and the two activators can act independently or synergistically. The heterodimer composed of IDH3A and IDH3B subunits cannot be allosterically regulated and the allosteric regulation of the heterotetramer is through the IDH3G subunit and not the IDH3B subunit. The IDH3G subunit contains the allosteric site which consists of a CIT-binding site and an ADP-binding site, and the binding of CIT and ADP causes conformational changes at the allosteric site which are transmitted to the active site in the catalytic subunit (IDH3A) through a cascade of conformational changes at the heterodimer interface, leading to stabilization of the isocitrate-binding at the active site and thus activation of the enzyme. ATP can activate the heterotetramer and the heterodimer composed of IDH3A and IDH3G subunits at low concentrations but inhibits their activities at high concentrations, whereas ATP exhibits only inhibitory effect on the heterodimer composed of IDH3A and IDH3B subunits. In terms of biological role, plays a structural role to facilitate the assembly and ensure the full activity of the enzyme catalyzing the decarboxylation of isocitrate (ICT) into alpha-ketoglutarate. The heterodimer composed of the alpha (IDH3A) and beta (IDH3B) subunits and the heterodimer composed of the alpha (IDH3A) and gamma (IDH3G) subunits, have considerable basal activity but the full activity of the heterotetramer (containing two subunits of IDH3A, one of IDH3B and one of IDH3G) requires the assembly and cooperative function of both heterodimers. This chain is Isocitrate dehydrogenase [NAD] subunit beta, mitochondrial (IDH3B), found in Homo sapiens (Human).